We begin with the raw amino-acid sequence, 314 residues long: Probable cell division protein WhiA (314 aa).

The segment at residues 275–309 is a DNA-binding region (H-T-H motif); the sequence is SLKELGELVTSGAISKSGVNHRLKKIDEFAEKIKR.

Belongs to the WhiA family.

In terms of biological role, involved in cell division and chromosome segregation. In Oceanobacillus iheyensis (strain DSM 14371 / CIP 107618 / JCM 11309 / KCTC 3954 / HTE831), this protein is Probable cell division protein WhiA.